A 489-amino-acid polypeptide reads, in one-letter code: MLALYLIAGLLVGLLVYRLHLDPLSHIPGPFLAKFIPICNIRMLHTGRIVFTFRELHDTYGPVVRIGPSELSFATVTAFDSIYGFEGEKKFTIYGSRRGVVSSASGTDESLGNATSKESRRKLRPLITSTLNELMASSAEEYCHLALTEQLAAHRVGQDGSTPISLSTLNYRYLWQLANMVAFGNRGQEAHRETFNPHIRWPSPFVSFIDLLFIFCSRATIQQHARTAYKAWQAIRFVCRQTTQGPQVDFIADDSTFPDNLHRRLRQAAEKAGLDDVSDFTLLVNSMILRFSVYGTSDHMINAVFYYLLRHPQCLKRLEKEVLNAGTSVEELSDNRLAKLPYLNACINETFRISPAFNGGILQRVSCGATVDGVYVPPGVAVTVDNYTLGRSKQYWENPDAFCPERWLESSDKNVFKASRPFLIGSRQCPGRQMAYQMFRILVAKLVYLYSMELVNKDFDIERDTFCGLHWADLEVDAILKPRTDVLGY.

A signal peptide spans 1 to 18 (MLALYLIAGLLVGLLVYR). 3 N-linked (GlcNAc...) asparagine glycosylation sites follow: Asn-113, Asn-348, and Asn-386. Position 429 (Cys-429) interacts with heme.

The protein belongs to the cytochrome P450 family. Heme is required as a cofactor.

The catalysed reaction is 2 fonsecin B + NADPH + O2 + H(+) = bifonsecin B + NADP(+) + 2 H2O. The enzyme catalyses 2 rubrofusarin B + NADPH + O2 + 3 H(+) = nigerone + NADP(+) + 2 H2O. It functions in the pathway secondary metabolite biosynthesis. In terms of biological role, cytochrome P450 monooxygenase; part of the gene cluster that mediates the biosynthesis of bifonsecin B, a dimeric gamma-naphthopyrone. The first step in the biosynthesis of bifonsecin B is the production of gamma-naphthopyrone precursor YWA1 by the non-reducing polyketide synthase albA, via condensation of one acetyl-CoA starter unit with 6 malonyl-CoA units. YWA1 is then methylated by bfoE at position C-6 to yield foncesin which is further methylated at position C-8 by bfoD to produce fonsecin B. A key enzyme in the biosynthetic pathway is the cytochrome P450 monooxygenase bfoB which catalyzes the oxidative dimerization of fonsecin B to bifonsecin B. Bfob also catalyzes the oxidative dimerization of rubrofusarin B into nigerone. The stereoselectivity of bfoB is influenced by the two natural monomeric substrates; homodimerization of fonsecin B yields a stereochemically pure biaryl, M-foncerine B, while rubrofusarin B yields a mixture of enantiomers M- and P-nigerone. The chain is Cytochrome P450 monooxygenase bfoB from Aspergillus brasiliensis (strain CBS 101740 / IMI 381727 / IBT 21946).